A 144-amino-acid polypeptide reads, in one-letter code: Protein WAP-3 (144 aa).

Residues 1–21 (MRSRSFLVLVAVFLICETLVA) form the signal peptide. The segment at 28–49 (RGPKGQGQDPVEGQDQDEGQGP) is disordered. Position 34 (glycine 34) is a region of interest, 8 X 6 AA approximate tandem repeats. Tandem repeats lie at residues 34–39 (GQDPVE), 40–45 (GQDQDE), 46–51 (GQGPVK), 58–63 (GQDLVK), 64–69 (GQDPVE), 70–75 (GQDPVK), 76–81 (AQLPDK), and 82–87 (VQDPVK). A disordered region spans residues 64–85 (GQDPVEGQDPVKAQLPDKVQDP). The WAP domain occupies 97–144 (LFPKPGVCPKIIFCPLVNPPIKCWRDSHCPGVKKCCPSLCGKGCVTPR). 4 cysteine pairs are disulfide-bonded: cysteine 104–cysteine 132, cysteine 110–cysteine 136, cysteine 119–cysteine 131, and cysteine 125–cysteine 140.

Large intestine (relatively low levels).

This Sus scrofa (Pig) protein is Protein WAP-3.